The following is a 116-amino-acid chain: Putative membrane protein insertion efficiency factor (116 aa).

It belongs to the UPF0161 family.

The protein resides in the cell inner membrane. In terms of biological role, could be involved in insertion of integral membrane proteins into the membrane. This chain is Putative membrane protein insertion efficiency factor, found in Bartonella tribocorum (strain CIP 105476 / IBS 506).